A 193-amino-acid chain; its full sequence is Pyridoxal 5'-phosphate synthase subunit PdxT (193 aa).

50–52 contacts L-glutamine; the sequence is GES. The active-site Nucleophile is the Cys-82. L-glutamine-binding positions include Arg-109 and 136 to 137; that span reads IR. Catalysis depends on charge relay system residues His-172 and Glu-174.

The protein belongs to the glutaminase PdxT/SNO family. In the presence of PdxS, forms a dodecamer of heterodimers. Only shows activity in the heterodimer.

The catalysed reaction is aldehydo-D-ribose 5-phosphate + D-glyceraldehyde 3-phosphate + L-glutamine = pyridoxal 5'-phosphate + L-glutamate + phosphate + 3 H2O + H(+). The enzyme catalyses L-glutamine + H2O = L-glutamate + NH4(+). It functions in the pathway cofactor biosynthesis; pyridoxal 5'-phosphate biosynthesis. Its function is as follows. Catalyzes the hydrolysis of glutamine to glutamate and ammonia as part of the biosynthesis of pyridoxal 5'-phosphate. The resulting ammonia molecule is channeled to the active site of PdxS. This Streptococcus pneumoniae (strain JJA) protein is Pyridoxal 5'-phosphate synthase subunit PdxT.